A 181-amino-acid polypeptide reads, in one-letter code: Transcriptional repressor NrdR (181 aa).

Residues 3–34 (CPFCRHPDSRVVDSREAEEGSAIRRRRSCLSC) fold into a zinc finger. Residues 46 to 136 (LQVRKRSGAA…VYLAFESLTD (91 aa)) enclose the ATP-cone domain. Positions 148-181 (AAGPPTTRDGPARPVPRGAVDVSPVIGTQQVHSR) are disordered.

The protein belongs to the NrdR family. Zn(2+) is required as a cofactor.

Functionally, negatively regulates transcription of bacterial ribonucleotide reductase nrd genes and operons by binding to NrdR-boxes. This chain is Transcriptional repressor NrdR, found in Frankia casuarinae (strain DSM 45818 / CECT 9043 / HFP020203 / CcI3).